The following is a 605-amino-acid chain: Replication and transcription activator (605 aa).

Disordered stretches follow at residues 307 to 380 and 447 to 499; these read SLPS…AEPE and RIRP…AVTP. Residues 321-338 are compositionally biased toward low complexity; that stretch reads SADCGDSSSSSSDSGNSD. Basic and acidic residues predominate over residues 341–353; that stretch reads QSEREEARAEAPR. A compositionally biased stretch (basic residues) spans 355-364; that stretch reads RAPKSRRTSR.

This sequence belongs to the herpesviridae Rta family. Interacts with human ATF7IP protein, leading to promote and regulate host genes in virus-infected cells. Interacts with RNA polymerase III complex; this interaction downregulates small RNA transcription and 5'-pppRNA production.

It is found in the host nucleus. The protein localises to the virion tegument. Immediate-early transcription factor that controls the initiation of viral lytic gene expression and lytic reactivation from latency. Triggers lytic replication, and initiates a cellular senescence program in epithelial cells. Up-regulates human DCR3/TNFRSF6B by directly binding to its receptor. Globally induces a proteasome-dependent loss of SUMOylated proteins in the host cell and the loss of promeylocytic leukemia nuclear bodies. Improves the stability of the triplex capsid protein TRX1 by reducing the ubiquitination level of the latter. Mediates evasion of inflammasome activation and antiviral responses (T- and NK cell activation) during EBV early lytic infection. This is Replication and transcription activator from Epstein-Barr virus (strain B95-8) (HHV-4).